The chain runs to 237 residues: H/ACA ribonucleoprotein complex subunit 1 (237 aa).

Gly residues-rich tracts occupy residues 1–59 (MGFG…GGRG) and 172–237 (RGGG…RGRW). Disordered stretches follow at residues 1–64 (MGFG…FDTG) and 157–237 (KPPQ…RGRW). RGG-box stretches follow at residues 4–56 (GKPR…GRGG) and 166–236 (KAFT…GRGR).

The protein belongs to the GAR1 family. As to quaternary structure, component of the box H/ACA small nucleolar ribonucleoprotein (H/ACA snoRNP) complex consisting of Nop60B, Gar1, NPH2 and Nop10, and associated with H/ACA-type snoRNAs.

Its subcellular location is the nucleus. It is found in the nucleolus. Functionally, component of the box H/ACA small nucleolar ribonucleoprotein (H/ACA snoRNP) complex, which catalyzes pseudouridylation of rRNA. This involves the isomerization of uridine such that the ribose is subsequently attached to C5, instead of the normal N1. Pseudouridine ('psi') residues may serve to stabilize the conformation of rRNAs. Required for ribosome biogenesis. H/ACA snoRNP complex-dependent ribosome biogenesis is important in female germline cell differentiation during oogenesis. The chain is H/ACA ribonucleoprotein complex subunit 1 from Drosophila melanogaster (Fruit fly).